Consider the following 58-residue polypeptide: Small ribosomal subunit protein bS21 (58 aa).

The interval 30–58 (SEVRKREHYEKPSVKRKKKSEAARKRKFK) is disordered. Positions 31-42 (EVRKREHYEKPS) are enriched in basic and acidic residues. Positions 43-58 (VKRKKKSEAARKRKFK) are enriched in basic residues.

It belongs to the bacterial ribosomal protein bS21 family.

In Clostridium perfringens (strain ATCC 13124 / DSM 756 / JCM 1290 / NCIMB 6125 / NCTC 8237 / Type A), this protein is Small ribosomal subunit protein bS21.